We begin with the raw amino-acid sequence, 299 residues long: UDP-N-acetylenolpyruvoylglucosamine reductase (299 aa).

The region spanning 21–189 is the FAD-binding PCMH-type domain; the sequence is RVGGPAQWLL…LSARFRLEPG (169 aa). Arginine 168 is an active-site residue. Serine 219 functions as the Proton donor in the catalytic mechanism. The active site involves glutamate 289.

It belongs to the MurB family. FAD is required as a cofactor.

It is found in the cytoplasm. It catalyses the reaction UDP-N-acetyl-alpha-D-muramate + NADP(+) = UDP-N-acetyl-3-O-(1-carboxyvinyl)-alpha-D-glucosamine + NADPH + H(+). It functions in the pathway cell wall biogenesis; peptidoglycan biosynthesis. Functionally, cell wall formation. The chain is UDP-N-acetylenolpyruvoylglucosamine reductase from Parasynechococcus marenigrum (strain WH8102).